The sequence spans 138 residues: RuBisCO chaperone RbcX (138 aa).

The disordered stretch occupies residues 118-138; it reads VDNFPSETSNGESNNNDSPPS. Residues 122-138 are compositionally biased toward polar residues; the sequence is PSETSNGESNNNDSPPS.

Belongs to the RbcX family. In terms of assembly, homodimer. Interacts with the exposed C-terminal peptide of RbcL via its central cleft, contacts a second RbcL monomer via its peripheral polar surface.

It is found in the carboxysome. The protein localises to the cytoplasm. Functionally, an RbcL-specific chaperone. The central cleft of the RbcX homodimer (RbcX2) binds the C-terminus of an RbcL monomer, stabilizing the C-terminus and probably preventing its reassociation with chaperonin GroEL-ES. At the same time the peripheral region of RbcX2 binds a second RbcL monomer, bridging the RbcL homodimers in the correct orientation. The RbcX2(2)-bound RbcL dimers then assemble into the RbcL8 core (RbcL8-(RbcX2)8). RbcS binding triggers the release of RbcX2. In Synechocystis sp. (strain ATCC 27184 / PCC 6803 / Kazusa), this protein is RuBisCO chaperone RbcX.